We begin with the raw amino-acid sequence, 422 residues long: Methylaspartate ammonia-lyase (422 aa).

Position 175 (Gln175) interacts with (2S,3S)-3-methyl-L-aspartate. 3 residues coordinate Mg(2+): Asp239, Glu276, and Asp310. Gln332 serves as a coordination point for (2S,3S)-3-methyl-L-aspartate. Lys334 serves as the catalytic Proton acceptor. Thr363–Cys364 provides a ligand contact to (2S,3S)-3-methyl-L-aspartate.

The protein belongs to the methylaspartate ammonia-lyase family. As to quaternary structure, homodimer. Requires Mg(2+) as cofactor.

The enzyme catalyses (2S,3S)-3-methyl-L-aspartate = mesaconate + NH4(+). It functions in the pathway amino-acid degradation; L-glutamate degradation via mesaconate pathway; acetate and pyruvate from L-glutamate: step 2/4. Functionally, involved in the methylaspartate cycle. Catalyzes the formation of the alpha,beta-unsaturated bond by the reversible anti elimination of ammonia from L-threo-beta-methylaspartate (L-threo-(2S,3S)-3-methylaspartate) to give mesaconate. This is Methylaspartate ammonia-lyase (mal) from Haloarcula marismortui (strain ATCC 43049 / DSM 3752 / JCM 8966 / VKM B-1809) (Halobacterium marismortui).